Consider the following 208-residue polypeptide: AN1-type zinc finger protein 6 (208 aa).

The A20-type zinc finger occupies 8 to 42 (SQVPMLCSTGCGFYGNPRTNGMCSVCYKEHLQRQN). Zn(2+) contacts are provided by Cys14, Cys18, Cys30, and Cys33. Residues 41–68 (QNSSNGRISPPATSVSSLSESLPVQCTD) are compositionally biased toward polar residues. Positions 41–140 (QNSSNGRISP…PSEEQSKSLE (100 aa)) are disordered. Ser49 is modified (phosphoserine). The segment covering 80–94 (STSSSMQPSPVSNQS) has biased composition (low complexity). 2 stretches are compositionally biased toward polar residues: residues 95-110 (LLSE…STSV) and 120-133 (VQAS…QPSE). The AN1-type zinc-finger motif lies at 143-189 (KQKKNRCFMCRKKVGLTGFECRCGNVYCGVHRYSDVHNCSYNYKADA). 8 residues coordinate Zn(2+): Cys149, Cys152, Cys163, Cys165, Cys170, His173, His179, and Cys181. Lys204 carries the N6-acetyllysine modification.

Interacts with PKN1. Interacts with TRAF2. Interacts with mono- and polyubiquitin. Interacts with PEX6. Interacts with PEX5 (Cys-linked ubiquitinated). As to expression, widely expressed with high level in heart, skeletal muscle, liver, kidney and placenta.

Its subcellular location is the cytoplasm. Involved in regulation of TNF-alpha induced NF-kappa-B activation and apoptosis. Involved in modulation of 'Lys-48'-linked polyubiquitination status of TRAF2 and decreases association of TRAF2 with RIPK1. Required for PTS1 target sequence-dependent protein import into peroxisomes and PEX5 stability; may cooperate with PEX6. In vitro involved in PEX5 export from the cytosol to peroxisomes. The sequence is that of AN1-type zinc finger protein 6 (ZFAND6) from Homo sapiens (Human).